A 1049-amino-acid polypeptide reads, in one-letter code: Tegument protein pp150 (1049 aa).

Disordered stretches follow at residues 397 to 549 and 659 to 945; these read EERQ…DPRF and PFRM…YPAV. Acidic residues predominate over residues 428 to 439; that stretch reads ADEDDDDDDDDE. Residues 452 to 462 are compositionally biased toward gly residues; that stretch reads SGKGAASGGGV. The span at 463 to 474 shows a compositional bias: low complexity; the sequence is SSIFSGLLSSGS. Residues 475–490 are compositionally biased toward polar residues; that stretch reads QKPTSGPLNIPQQQQR. Over residues 509–525 the composition is skewed to basic and acidic residues; the sequence is VRRDSAWDVRPLTETRG. The span at 672-688 shows a compositional bias: low complexity; that stretch reads TVSTTPRRPSTPRAAVT. Acidic residues predominate over residues 710-722; it reads PVEDSEEEDDDSS. Polar residues predominate over residues 731–743; the sequence is GHTTPSSDYNNDV. The span at 745–757 shows a compositional bias: low complexity; it reads SPPSQTPEQSTPS. Polar residues-rich tracts occupy residues 766–776, 791–800, and 808–835; these read SPMTTTSTSQK, RAQTVTSTPV, and VSGTPSTVPATLLQPQPASSKTTSSRNV. 4 stretches are compositionally biased toward low complexity: residues 836-855, 866-884, 912-928, and 936-945; these read TSGAGTSSASSARQPSASAS, SPATSPLSMLSSASPSPAK, VVGRPPSVPVSGSAPGR, and ASTTPTYPAV. O-linked (GlcNAc) serine; by host glycosylation is present at Ser-922. A glycan (O-linked (GlcNAc) serine; by host) is linked at Ser-953. The segment at 1006–1032 is disordered; that stretch reads DLSSPQKSGTGPQPGSAGMGGAKTPSD. The span at 1008–1018 shows a compositional bias: polar residues; the sequence is SSPQKSGTGPQ.

Belongs to the herpesviridae large structural phosphoprotein family. As to quaternary structure, interacts with host BICD1 and RAB6A. Interacts with small capsid protein UL48A; this interaction links together the capsid and pp150. Interacts with host CCNA2. Phosphorylated by host CCNA2.

Its subcellular location is the virion tegument. It localises to the host cytoplasm. The protein localises to the host nucleus. In terms of biological role, participates in the last steps of viral maturation and release. Associates with nuclear capsids prior to DNA encapsidation and later preserves the integrity of nucleocapsids through secondary envelopment at the assembly compartment. Interacts with host CCNA2 and thereby blocks the onset of lytic gene expression to promote establishment of a quiescent state of infection in undifferentiated cells. This is Tegument protein pp150 (UL32) from Homo sapiens (Human).